Consider the following 116-residue polypeptide: MRHRCRVPKLGRPADQRDALIRTLTTELLRHGRISTTLARAKVIRSEADRMITLAKDGSLAARRQASGFLYDPELVQSVFAAAQERYGSRRGGYTRILRTVARRGDNSPMAIIELV.

It belongs to the bacterial ribosomal protein bL17 family. In terms of assembly, part of the 50S ribosomal subunit. Contacts protein L32.

The sequence is that of Large ribosomal subunit protein bL17 from Gloeobacter violaceus (strain ATCC 29082 / PCC 7421).